We begin with the raw amino-acid sequence, 391 residues long: GTPase Obg (391 aa).

The Obg domain occupies 1-159 (MKFVDEARIL…RELMLELMLL (159 aa)). In terms of domain architecture, OBG-type G spans 160-333 (ADVGMLGMPN…LCWDIMEFMK (174 aa)). GTP contacts are provided by residues 166–173 (GMPNAGKS), 191–195 (FTTLV), 213–216 (DIPG), 283–286 (NKVD), and 314–316 (SAI). Serine 173 and threonine 193 together coordinate Mg(2+).

It belongs to the TRAFAC class OBG-HflX-like GTPase superfamily. OBG GTPase family. In terms of assembly, monomer. Requires Mg(2+) as cofactor.

Its subcellular location is the cytoplasm. In terms of biological role, an essential GTPase which binds GTP, GDP and possibly (p)ppGpp with moderate affinity, with high nucleotide exchange rates and a fairly low GTP hydrolysis rate. Plays a role in control of the cell cycle, stress response, ribosome biogenesis and in those bacteria that undergo differentiation, in morphogenesis control. This Photorhabdus laumondii subsp. laumondii (strain DSM 15139 / CIP 105565 / TT01) (Photorhabdus luminescens subsp. laumondii) protein is GTPase Obg.